The primary structure comprises 239 residues: Norbelladine 4'-O-methyltransferase (239 aa).

S-adenosyl-L-methionine-binding positions include Val55, Glu77, 79 to 80 (GV), Ser85, Asp103, and Ala132. Asp155 serves as a coordination point for a divalent metal cation. S-adenosyl-L-methionine is bound at residue Asp157. A divalent metal cation contacts are provided by Asp181 and Asn182.

It belongs to the class I-like SAM-binding methyltransferase superfamily. Cation-dependent O-methyltransferase family. Mg(2+) serves as cofactor. As to expression, highly expressed in bulbs. Detected in leaves and inflorescences.

The catalysed reaction is norbelladine + S-adenosyl-L-methionine = 4'-O-methylnorbelladine + S-adenosyl-L-homocysteine + H(+). It functions in the pathway alkaloid biosynthesis. 4'-O-methyltransferase converting norbelladine to 4'-O-methylnorbelladine. 4'-O-methylnorbelladine is a precursor to all Amaryllidaceae alkaloids such as galanthamine, lycorine and haemanthamine, and including haemanthamine- and crinamine-type alkaloids, promising anticancer agents. Can use norbelladine, N-methylnorbelladine and dopamine as substrate, but not caffeic acid, vanillin, 3,4-dihydroxybenzaldehyde and tyramine. This Narcissus aff. pseudonarcissus MK-2014 (Daffodil) protein is Norbelladine 4'-O-methyltransferase.